The sequence spans 189 residues: Peptidyl-tRNA hydrolase (189 aa).

Residue Tyr14 coordinates tRNA. His19 acts as the Proton acceptor in catalysis. The tRNA site is built by Phe61, Asn63, and Asn109.

The protein belongs to the PTH family. In terms of assembly, monomer.

It localises to the cytoplasm. The catalysed reaction is an N-acyl-L-alpha-aminoacyl-tRNA + H2O = an N-acyl-L-amino acid + a tRNA + H(+). In terms of biological role, hydrolyzes ribosome-free peptidyl-tRNAs (with 1 or more amino acids incorporated), which drop off the ribosome during protein synthesis, or as a result of ribosome stalling. Functionally, catalyzes the release of premature peptidyl moieties from peptidyl-tRNA molecules trapped in stalled 50S ribosomal subunits, and thus maintains levels of free tRNAs and 50S ribosomes. This Sulfurovum sp. (strain NBC37-1) protein is Peptidyl-tRNA hydrolase.